We begin with the raw amino-acid sequence, 246 residues long: uncharacterized protein (246 aa).

This is an uncharacterized protein from Escherichia coli O157:H7.